Consider the following 548-residue polypeptide: ComP-specific O-oligosaccharyltransferase (548 aa).

12 consecutive transmembrane segments (helical) span residues 8–28 (IKNY…IIPN), 32–52 (LSST…LLTV), 68–88 (WFLF…IYFF), 91–111 (FFFS…GFNE), 119–139 (IVKK…LIAI), 164–184 (LGQP…LCYL), 189–209 (SLNN…NVMT), 213–233 (SAWI…QKKI), 239–259 (IFFN…FNLI), 331–351 (MLWN…CFLI), 363–383 (LFLF…YPFA), and 418–438 (TLFL…VLDI).

It belongs to the PglL O-oligosaccharyltransferase family.

The protein resides in the cell membrane. Its function is as follows. Specifically catalyzes the glycosylation of the pilin-like competence factor ComP. In Acinetobacter baylyi (strain ATCC 33305 / BD413 / ADP1), this protein is ComP-specific O-oligosaccharyltransferase.